Reading from the N-terminus, the 529-residue chain is Low affinity inorganic phosphate transporter 5 (529 aa).

At 1 to 21 the chain is on the cytoplasmic side; it reads MASNNLNVLNALDTAHTQWYH. Residues 22 to 42 traverse the membrane as a helical segment; sequence VTAVVIAGMGFFTDAYDLFCI. Residues 43-71 are Extracellular-facing; the sequence is STISKLLGRLYYYDPHTHAPGKLPHTVNN. Residues 72–92 form a helical membrane-spanning segment; it reads WVTGVALVGTLTGQLVFGWLG. Topologically, residues 93–99 are cytoplasmic; sequence DKLGRKK. The chain crosses the membrane as a helical span at residues 100–120; it reads VYGLTLILMVICALSSGLSFG. At 121 to 124 the chain is on the extracellular side; the sequence is YSRK. The chain crosses the membrane as a helical span at residues 125–145; sequence VVIGTLCFFRFWLGFGIGGDY. Residues 146 to 163 are Cytoplasmic-facing; sequence PLSATIMSEYANKRTRGA. The chain crosses the membrane as a helical span at residues 164–184; the sequence is FIAAVFAMQGVGIIFAGLVLM. Residues 185-211 are Extracellular-facing; it reads TVSKVFLMRYAGKAFSTDEVFSTEPEA. Residues 212–232 traverse the membrane as a helical segment; that stretch reads DYVWRIVLMLGALPALLTYYW. Topologically, residues 233-291 are cytoplasmic; sequence RMKMPETGRYTAIIEGNAKQAAIDMGKVLEIEIQAEGEKLAKFKSANDYSLLSNEFFQR. A helical transmembrane segment spans residues 292–312; it reads HGLHLIGTMSTWFLLDIAFYS. Residues 313-344 are Extracellular-facing; sequence QNLTQKDIFPTMGLVSDAKSISALREMFETSR. N314 carries N-linked (GlcNAc...) asparagine glycosylation. Residues 345 to 365 form a helical membrane-spanning segment; the sequence is AMFVIALLGTFPGYWFTVFFI. Residues 366 to 374 are Cytoplasmic-facing; the sequence is EKIGRFKIQ. Residues 375–395 traverse the membrane as a helical segment; that stretch reads LMGFFMMSIFMAIIGVRYDYL. The Extracellular portion of the chain corresponds to 396–405; that stretch reads KTKDHKWTFA. The helical transmembrane segment at 406-426 threads the bilayer; the sequence is ALYGLTFFFANSGPNSTTFVL. Topologically, residues 427–472 are cytoplasmic; that stretch reads PAELFPTRVRSTCHALSAASGKAGAMVSAFGVQQYTQDGEVHKIKK. A helical membrane pass occupies residues 473–493; sequence AMLFLAFTNMVGFCCTFLVTE. Topologically, residues 494 to 529 are extracellular; that stretch reads TKGRSLEEISGEDENQNETKMKGRPVSGGHQDDGWD. Residues 500-529 form a disordered region; it reads EEISGEDENQNETKMKGRPVSGGHQDDGWD. N-linked (GlcNAc...) asparagine glycosylation occurs at N510.

This sequence belongs to the major facilitator superfamily. Phosphate:H(+) symporter (TC 2.A.1.9) family. In terms of tissue distribution, expressed at low levels in non-mycorrhized roots.

The protein resides in the cell membrane. The enzyme catalyses phosphate(in) + H(+)(in) = phosphate(out) + H(+)(out). Its function is as follows. Low-affinity transporter for external inorganic phosphate (Pi) probably involved in the acquisition of phosphate released by arbuscular mycorrhizal (AM) fungi during AM symbiosis. The chain is Low affinity inorganic phosphate transporter 5 from Petunia hybrida (Petunia).